Reading from the N-terminus, the 143-residue chain is Hemoglobin subunit alpha-1 (143 aa).

S2 is subject to N-acetylserine. The region spanning 2–143 (SLSTKDKETV…VSLALAEKYR (142 aa)) is the Globin domain. Residue H60 participates in O2 binding. H89 contributes to the heme b binding site.

The protein belongs to the globin family. As to quaternary structure, hb1 is a heterotetramer of two alpha-1 chains and two beta-1 chains. Red blood cells.

In terms of biological role, involved in oxygen transport from gills to the various peripheral tissues. This is Hemoglobin subunit alpha-1 from Liparis tunicatus (Kelp snailfish).